Here is a 470-residue protein sequence, read N- to C-terminus: MTVQTFTPNQTTTLETAKKTIAEQSQNSQTTGNKIGFVSLGCPKNLVDSERILTQLRTEGYEIVNSYHDSDVVIVNTCGFIDSAVQESLDTIGEALKENGKVIVTGCLGAREDEIRQVHPNVLGITGPHAYQNVLEHVHQYAPKPAHNPFTSLVPDHGVKLTPKHYAYLKISEGCNHRCTFCIIPSMRGDLVSRPVGEIIGEAERLKNAGVKELLVISQDTSAYGVDTKHSLGFANGSPVRHNIKALSEELGKMGIWVRLHYVYPYPHVDEIIPLMAEGKVLPYLDIPFQHASPRVLKMMKRPGQAERTLERIKKWREICPELVIRSTFIVGFPGETEEDFQILLDWLKEAQLDRVGCFKYSPVEGAAANEIEDQIPEDVKQDRFERFMLVQQEISAAKLQKRIGSTMQVLIDEVDDEGAIGRTYADAPEIDGLVYLNGETNLKPGELVNVVIEHADEYDLWGSVLHDAQ.

The MTTase N-terminal domain maps to 33–143; that stretch reads NKIGFVSLGC…VLEHVHQYAP (111 aa). Positions 42, 78, 107, 175, 179, and 182 each coordinate [4Fe-4S] cluster. A Radical SAM core domain is found at 161-398; that stretch reads LTPKHYAYLK…MLVQQEISAA (238 aa). The 67-residue stretch at 401-467 folds into the TRAM domain; the sequence is QKRIGSTMQV…EYDLWGSVLH (67 aa).

This sequence belongs to the methylthiotransferase family. RimO subfamily. Requires [4Fe-4S] cluster as cofactor.

The protein localises to the cytoplasm. The catalysed reaction is L-aspartate(89)-[ribosomal protein uS12]-hydrogen + (sulfur carrier)-SH + AH2 + 2 S-adenosyl-L-methionine = 3-methylsulfanyl-L-aspartate(89)-[ribosomal protein uS12]-hydrogen + (sulfur carrier)-H + 5'-deoxyadenosine + L-methionine + A + S-adenosyl-L-homocysteine + 2 H(+). Catalyzes the methylthiolation of an aspartic acid residue of ribosomal protein uS12. The chain is Ribosomal protein uS12 methylthiotransferase RimO from Vibrio cholerae serotype O1 (strain ATCC 39541 / Classical Ogawa 395 / O395).